Consider the following 400-residue polypeptide: Subtilisin-like protease 11 (400 aa).

A signal peptide spans 1–19; sequence MGLFKVIFTAVAALSAVDA. The propeptide occupies 20-117; it reads AELLSSAKSK…VEHDRHVYIS (98 aa). An Inhibitor I9 domain is found at 35–116; the sequence is SYLVVMKDSV…FVEHDRHVYI (82 aa). The region spanning 127 to 400 is the Peptidase S8 domain; that stretch reads SWGLGRVSHR…NKLLYNRSGK (274 aa). Asn138 is a glycosylation site (N-linked (GlcNAc...) asparagine). The Charge relay system role is filled by Asp159. N-linked (GlcNAc...) asparagine glycosylation is present at Asn181. His191 (charge relay system) is an active-site residue. Asn252 and Asn337 each carry an N-linked (GlcNAc...) asparagine glycan. Ser346 functions as the Charge relay system in the catalytic mechanism. N-linked (GlcNAc...) asparagine glycans are attached at residues Asn388 and Asn396.

Belongs to the peptidase S8 family.

The protein localises to the secreted. Functionally, secreted subtilisin-like serine protease with keratinolytic activity that contributes to pathogenicity. The protein is Subtilisin-like protease 11 (SUB11) of Trichophyton verrucosum (strain HKI 0517).